The following is a 51-amino-acid chain: Sperm protamine P1 (51 aa).

Intrachain disulfides connect cysteine 7/cysteine 15 and cysteine 38/cysteine 48.

Belongs to the protamine P1 family. Cross-linked by interchain disulfide bonds around the DNA-helix. In terms of processing, phosphorylated by SRPK1. Testis.

The protein resides in the nucleus. Its subcellular location is the chromosome. Protamines substitute for histones in the chromatin of sperm during the haploid phase of spermatogenesis. They compact sperm DNA into a highly condensed, stable and inactive complex. In Rattus norvegicus (Rat), this protein is Sperm protamine P1 (Prm1).